Consider the following 480-residue polypeptide: Glutamate--tRNA ligase (480 aa).

Positions 21–31 (PSPTGYLHVGG) match the 'HIGH' region motif. C110, C112, C137, and H139 together coordinate Zn(2+). The 'KMSKS' region signature appears at 248–252 (KLSKR). Position 251 (K251) interacts with ATP.

The protein belongs to the class-I aminoacyl-tRNA synthetase family. Glutamate--tRNA ligase type 1 subfamily. As to quaternary structure, monomer. Requires Zn(2+) as cofactor.

It localises to the cytoplasm. It catalyses the reaction tRNA(Glu) + L-glutamate + ATP = L-glutamyl-tRNA(Glu) + AMP + diphosphate. Functionally, catalyzes the attachment of glutamate to tRNA(Glu) in a two-step reaction: glutamate is first activated by ATP to form Glu-AMP and then transferred to the acceptor end of tRNA(Glu). The protein is Glutamate--tRNA ligase of Mannheimia succiniciproducens (strain KCTC 0769BP / MBEL55E).